We begin with the raw amino-acid sequence, 152 residues long: UPF0225 protein YchJ (152 aa).

Belongs to the UPF0225 family.

The sequence is that of UPF0225 protein YchJ from Shigella dysenteriae serotype 1 (strain Sd197).